We begin with the raw amino-acid sequence, 371 residues long: 4-hydroxy-3-methylbut-2-en-1-yl diphosphate synthase (flavodoxin) (371 aa).

The [4Fe-4S] cluster site is built by cysteine 270, cysteine 273, cysteine 305, and glutamate 312.

This sequence belongs to the IspG family. The cofactor is [4Fe-4S] cluster.

The enzyme catalyses (2E)-4-hydroxy-3-methylbut-2-enyl diphosphate + oxidized [flavodoxin] + H2O + 2 H(+) = 2-C-methyl-D-erythritol 2,4-cyclic diphosphate + reduced [flavodoxin]. It functions in the pathway isoprenoid biosynthesis; isopentenyl diphosphate biosynthesis via DXP pathway; isopentenyl diphosphate from 1-deoxy-D-xylulose 5-phosphate: step 5/6. Functionally, converts 2C-methyl-D-erythritol 2,4-cyclodiphosphate (ME-2,4cPP) into 1-hydroxy-2-methyl-2-(E)-butenyl 4-diphosphate. This chain is 4-hydroxy-3-methylbut-2-en-1-yl diphosphate synthase (flavodoxin), found in Shewanella sediminis (strain HAW-EB3).